Consider the following 733-residue polypeptide: 1,4-alpha-glucan branching enzyme GlgB (733 aa).

Aspartate 409 functions as the Nucleophile in the catalytic mechanism. Glutamate 462 functions as the Proton donor in the catalytic mechanism.

This sequence belongs to the glycosyl hydrolase 13 family. GlgB subfamily. As to quaternary structure, monomer.

The enzyme catalyses Transfers a segment of a (1-&gt;4)-alpha-D-glucan chain to a primary hydroxy group in a similar glucan chain.. Its pathway is glycan biosynthesis; glycogen biosynthesis. Catalyzes the formation of the alpha-1,6-glucosidic linkages in glycogen by scission of a 1,4-alpha-linked oligosaccharide from growing alpha-1,4-glucan chains and the subsequent attachment of the oligosaccharide to the alpha-1,6 position. This Gloeobacter violaceus (strain ATCC 29082 / PCC 7421) protein is 1,4-alpha-glucan branching enzyme GlgB.